The following is a 55-amino-acid chain: Large ribosomal subunit protein bL33 (55 aa).

The protein belongs to the bacterial ribosomal protein bL33 family.

This is Large ribosomal subunit protein bL33 from Methylocella silvestris (strain DSM 15510 / CIP 108128 / LMG 27833 / NCIMB 13906 / BL2).